The sequence spans 273 residues: Dermonecrotic toxin LdSicTox-alphaIB3aii (273 aa).

The active site involves His-5. 2 residues coordinate Mg(2+): Glu-25 and Asp-27. His-41 (nucleophile) is an active-site residue. Cystine bridges form between Cys-45-Cys-51 and Cys-47-Cys-190. Asp-85 is a binding site for Mg(2+).

It belongs to the arthropod phospholipase D family. Class II subfamily. Mg(2+) is required as a cofactor. In terms of tissue distribution, expressed by the venom gland.

The protein resides in the secreted. It catalyses the reaction an N-(acyl)-sphingosylphosphocholine = an N-(acyl)-sphingosyl-1,3-cyclic phosphate + choline. The enzyme catalyses an N-(acyl)-sphingosylphosphoethanolamine = an N-(acyl)-sphingosyl-1,3-cyclic phosphate + ethanolamine. The catalysed reaction is a 1-acyl-sn-glycero-3-phosphocholine = a 1-acyl-sn-glycero-2,3-cyclic phosphate + choline. It carries out the reaction a 1-acyl-sn-glycero-3-phosphoethanolamine = a 1-acyl-sn-glycero-2,3-cyclic phosphate + ethanolamine. Its function is as follows. Dermonecrotic toxins cleave the phosphodiester linkage between the phosphate and headgroup of certain phospholipids (sphingolipid and lysolipid substrates), forming an alcohol (often choline) and a cyclic phosphate. This toxin acts on sphingomyelin (SM). It may also act on ceramide phosphoethanolamine (CPE), lysophosphatidylcholine (LPC) and lysophosphatidylethanolamine (LPE), but not on lysophosphatidylserine (LPS), and lysophosphatidylglycerol (LPG). It acts by transphosphatidylation, releasing exclusively cyclic phosphate products as second products. Induces dermonecrosis, hemolysis, increased vascular permeability, edema, inflammatory response, and platelet aggregation. The sequence is that of Dermonecrotic toxin LdSicTox-alphaIB3aii from Loxosceles deserta (Desert recluse spider).